A 363-amino-acid chain; its full sequence is Lactose transport ATP-binding protein LacK (363 aa).

The ABC transporter domain occupies Val4–Ile234. An ATP-binding site is contributed by Gly36–Ser43.

Belongs to the ABC transporter superfamily.

The protein resides in the cell inner membrane. Its function is as follows. Part of the binding-protein-dependent transport system for lactose. Probably responsible for energy coupling to the transport system. This Rhizobium radiobacter (Agrobacterium tumefaciens) protein is Lactose transport ATP-binding protein LacK (lacK).